The sequence spans 144 residues: Large ribosomal subunit protein uL15 (144 aa).

The tract at residues 1-52 (MRLNTLSPAAGSKPSKKRVGRGIGSGLGKTGGRGHKGQKSRSGGKVRAGFEG) is disordered. The segment covering 21-31 (RGIGSGLGKTG) has biased composition (gly residues). Positions 32–44 (GRGHKGQKSRSGG) are enriched in basic residues.

This sequence belongs to the universal ribosomal protein uL15 family. Part of the 50S ribosomal subunit.

Its function is as follows. Binds to the 23S rRNA. The protein is Large ribosomal subunit protein uL15 of Aliivibrio fischeri (strain ATCC 700601 / ES114) (Vibrio fischeri).